The sequence spans 303 residues: Rhomboid-related protein 2 (303 aa).

Residues 20 to 39 form a disordered region; that stretch reads MKEELEEEEKMREDGGGKDR. Residues 28–39 are compositionally biased toward basic and acidic residues; it reads EKMREDGGGKDR. A run of 7 helical transmembrane segments spans residues 72 to 92, 128 to 148, 159 to 179, 183 to 203, 212 to 232, 245 to 265, and 278 to 298; these read PVFI…YAVW, LVHA…VLGI, VGLV…IFDP, LVGA…NVLV, FGIF…GFAL, VSFA…YTVF, and FWIA…FNIF. Serine 187 (nucleophile) is an active-site residue. Histidine 250 is a catalytic residue.

The protein belongs to the peptidase S54 family. Proteolytic processing of the proenzyme produces a N-terminal fragment (NTF) and a C-terminal fragment (CTF). The processing is required for activation of the protease.

Its subcellular location is the cell membrane. It carries out the reaction Cleaves type-1 transmembrane domains using a catalytic dyad composed of serine and histidine that are contributed by different transmembrane domains.. In terms of biological role, involved in regulated intramembrane proteolysis and the subsequent release of functional polypeptides from their membrane anchors. Known substrate: EFNB3. The sequence is that of Rhomboid-related protein 2 (RHBDL2) from Homo sapiens (Human).